The following is a 300-amino-acid chain: C-4 methylsterol oxidase erg25 (300 aa).

Residues 140-276 (TLFFFLEDTW…FRWWDAVLKT (137 aa)) form the Fatty acid hydroxylase domain. Residues 154–158 (HRLFH) carry the Histidine box-1 motif. The Histidine box-2 signature appears at 167-171 (HKVHH). Residues 186–206 (PLEIILLGAGTVFVPLMWCYF) traverse the membrane as a helical segment. A Histidine box-3 motif is present at residues 251 to 257 (HHDYHHM).

The protein belongs to the sterol desaturase family. Heterotetramer of erg25, erg26, erg27 and erg28. Erg28 acts as a scaffold to tether erg27 and other 4,4-demethylation-related enzymes, forming a demethylation enzyme complex, in the endoplasmic reticulum. Fe cation serves as cofactor.

It localises to the endoplasmic reticulum membrane. It catalyses the reaction 4,4-dimethyl-5alpha-cholesta-8,24-dien-3beta-ol + 6 Fe(II)-[cytochrome b5] + 3 O2 + 5 H(+) = 4beta-methylzymosterol-4alpha-carboxylate + 6 Fe(III)-[cytochrome b5] + 4 H2O. It carries out the reaction 4alpha-methylzymosterol + 6 Fe(II)-[cytochrome b5] + 3 O2 + 5 H(+) = 4alpha-carboxyzymosterol + 6 Fe(III)-[cytochrome b5] + 4 H2O. The protein operates within steroid biosynthesis; zymosterol biosynthesis; zymosterol from lanosterol: step 3/6. Its pathway is steroid metabolism; ergosterol biosynthesis. Its function is as follows. C-4 methylsterol oxidase; part of the third module of ergosterol biosynthesis pathway that includes by the late steps of the pathway. Erg25 is a catalytic component of the C-4 demethylation complex that catalyzes the three-step monooxygenation required for the demethylation of 4,4-dimethyl and 4alpha-methylsterols. The third module or late pathway involves the ergosterol synthesis itself through consecutive reactions that mainly occur in the endoplasmic reticulum (ER) membrane. Firstly, the squalene synthase erg9 catalyzes the condensation of 2 farnesyl pyrophosphate moieties to form squalene, which is the precursor of all steroids. Secondly, squalene is converted into lanosterol by the consecutive action of the squalene epoxidase erg1 and the lanosterol synthase erg7. The lanosterol 14-alpha-demethylase erg11/cyp1 catalyzes C14-demethylation of lanosterol to produce 4,4'-dimethyl cholesta-8,14,24-triene-3-beta-ol. In the next steps, a complex process involving various demethylation, reduction and desaturation reactions catalyzed by the C-14 reductase erg24 and the C-4 demethylation complex erg25-erg26-erg27 leads to the production of zymosterol. Erg28 likely functions in the C-4 demethylation complex reaction by tethering erg26 and Erg27 to the endoplasmic reticulum or to facilitate interaction between these proteins. Then, the sterol 24-C-methyltransferase erg6 catalyzes the methyl transfer from S-adenosyl-methionine to the C-24 of zymosterol to form fecosterol. The C-8 sterol isomerase erg2 catalyzes the reaction which results in unsaturation at C-7 in the B ring of sterols and thus converts fecosterol to episterol. The sterol-C5-desaturases erg31 and erg32 then catalyze the introduction of a C-5 double bond in the B ring to produce 5-dehydroepisterol. The C-22 sterol desaturase erg5 further converts 5-dehydroepisterol into ergosta-5,7,22,24(28)-tetraen-3beta-ol by forming the C-22(23) double bond in the sterol side chain. Finally, ergosta-5,7,22,24(28)-tetraen-3beta-ol is substrate of the C-24(28) sterol reductase erg4 to produce ergosterol. In the genus Schizosaccharomyces, a second route exists between lanosterol and fecosterol, via the methylation of lanosterol to eburicol by erg6, followed by C14-demethylation by erg11/cyp1 and C4-demethylation by the demethylation complex erg25-erg26-erg27. The polypeptide is C-4 methylsterol oxidase erg25 (Schizosaccharomyces pombe (strain 972 / ATCC 24843) (Fission yeast)).